Consider the following 122-residue polypeptide: NLLQFNRMIKLETKKNAVPFYAFYGCYCGWGGQGQPKDATDRCCFEHDCCYGKLTKCNTKSDLYSYSSKYGFLLCGKGTWCEEQICECDRIAATCLRRSLDTYKLKYMFYLDSYCKGPSEKC.

Disulfide bonds link C26–C115, C28–C44, C43–C95, C49–C122, C50–C88, C57–C81, and C75–C86. Ca(2+) contacts are provided by Y27, G29, and G31. H47 is a catalytic residue. Position 48 (D48) interacts with Ca(2+). D89 is a catalytic residue.

It belongs to the phospholipase A2 family. Group II subfamily. D49 sub-subfamily. In terms of assembly, nigroviriditoxin is a heterodimer of an acidic subunit A and a basic subunit B. Ca(2+) is required as a cofactor. In terms of tissue distribution, expressed by the venom gland.

The protein resides in the secreted. The enzyme catalyses a 1,2-diacyl-sn-glycero-3-phosphocholine + H2O = a 1-acyl-sn-glycero-3-phosphocholine + a fatty acid + H(+). Its function is as follows. Heterodimer A-B: Nigroviriditoxin possesses phospholipase A2 (PLA2) activity. It consists of a non-covalent association of a basic PLA2 subunit B with a non-enzymatic subunit A. Subunit B: Snake venom phospholipase A2 (PLA2) that induces myonecrosis in mice. PLA2 catalyzes the calcium-dependent hydrolysis of the 2-acyl groups in 3-sn-phosphoglycerides. The chain is Phospholipase A2 nigroviriditoxin basic subunit B from Bothriechis nigroviridis (Black-speckled palm pit viper).